The primary structure comprises 131 residues: Global transcriptional regulator Spx (131 aa).

Residues Cys-10 and Cys-13 are joined by a disulfide bond.

Belongs to the ArsC family. Spx subfamily. As to quaternary structure, interacts with the C-terminal domain of the alpha subunit of the RNAP.

It localises to the cytoplasm. Under non-stress conditions, Spx is degraded by ClpXP. Efficient degradation by ClpXP requires the adapter protein SpxH/YjbH. Function, levels and solubility of Spx are affected by SpxH/YjbH aggregation and stress conditions. Its function is as follows. Global transcriptional regulator that plays a key role in stress response and exerts either positive or negative regulation of genes. Acts by interacting with the C-terminal domain of the alpha subunit of the RNA polymerase (RNAP). This interaction can enhance binding of RNAP to the promoter region of target genes and stimulate their transcription, or block interaction of RNAP with activator proteins and repress transcription. Required for transcription of thioredoxin reductase (trxB). Modulates the expression of icaR, encoding a repressor of the biofilm operon icaADBC. Also controls the transcription of trfA, a gene implicated in cell wall antibiotic resistance, which in turn is required for degradation of MazE antitoxin, the unstable component of the MazEF toxin-antitoxin system, that neutralizes the endoribonuclease activity of MazF toxin. This Staphylococcus aureus (strain NCTC 8325 / PS 47) protein is Global transcriptional regulator Spx.